Here is a 580-residue protein sequence, read N- to C-terminus: Phosphatase and actin regulator 1 (580 aa).

Phosphoserine is present on residues Ser67 and Ser78. The residue at position 104 (Thr104) is a Phosphothreonine. Residues 108 to 129 (RRRSKFANLGRIFKPWKWRKKK) carry the Nuclear localization signal motif. An RPEL 1 repeat occupies 138–163 (AALERKISMRQSREELIKRGVLKEIY). Disordered stretches follow at residues 331–355 (EQRVPCSTSYHSSGLHSGDGVTKAG) and 376–410 (KENVPHESDYEDSSCLYTREEEEEEEDEDDDSSLY). Polar residues predominate over residues 335–345 (PCSTSYHSSGL). The segment covering 395-407 (EEEEEEEDEDDDS) has biased composition (acidic residues). RPEL repeat units lie at residues 422–447 (DSLAIKLSNRPSKRELEEKNILPRQT), 460–484 (TKLTRRLSQRPTAEELEQRNILKPR), and 498–523 (RRLTRKLSQRPTVEELRERKILIRFS). Residues 462-494 (LTRRLSQRPTAEELEQRNILKPRNEQEEQEEKR) are disordered. A Phosphoserine modification is found at Ser467. Positions 471–494 (TAEELEQRNILKPRNEQEEQEEKR) are enriched in basic and acidic residues. At Ser505 the chain carries Phosphoserine.

The protein belongs to the phosphatase and actin regulator family. As to quaternary structure, interacts (via RPEL repeats) with ACTA1 and PPP1CA; ACTA1 and PPP1CA compete for the same binding site. In terms of tissue distribution, detected in umbilical vein endothelial cells.

Its subcellular location is the cytoplasm. The protein localises to the synapse. The protein resides in the nucleus. Its function is as follows. Binds actin monomers (G actin) and plays a role in multiple processes including the regulation of actin cytoskeleton dynamics, actin stress fibers formation, cell motility and survival, formation of tubules by endothelial cells, and regulation of PPP1CA activity. Involved in the regulation of cortical neuron migration and dendrite arborization. The protein is Phosphatase and actin regulator 1 (PHACTR1) of Homo sapiens (Human).